The sequence spans 147 residues: UPF0179 protein NP_3406A (147 aa).

It belongs to the UPF0179 family.

The sequence is that of UPF0179 protein NP_3406A from Natronomonas pharaonis (strain ATCC 35678 / DSM 2160 / CIP 103997 / JCM 8858 / NBRC 14720 / NCIMB 2260 / Gabara) (Halobacterium pharaonis).